The following is a 752-amino-acid chain: BCLAF1 and THRAP3 family member 3 (752 aa).

The segment covering 1–13 (MARSRSRSPRWKQ) has biased composition (basic residues). 3 disordered regions span residues 1–114 (MARS…YMPT), 132–177 (PTVQ…QMSL), and 190–252 (DELR…DPAR). A phosphoserine mark is found at Ser15 and Ser17. Residues 23–57 (FEYHEERHFHGHYDPEYRHDQQRPFTWRMDDEKHG) are compositionally biased toward basic and acidic residues. Ser78 and Ser80 each carry phosphoserine. The span at 85 to 109 (PVEKFDTYKPHQEYFPGRGDDDRRS) shows a compositional bias: basic and acidic residues. Basic and acidic residues predominate over residues 190–199 (DELRHQRVQE). Ser205 is subject to Phosphoserine. Composition is skewed to basic and acidic residues over residues 222 to 231 (RYPEDHDFRK) and 238 to 252 (RPTD…DPAR). A Glycyl lysine isopeptide (Lys-Gly) (interchain with G-Cter in SUMO2) cross-link involves residue Lys416. Ser592 bears the Phosphoserine mark.

Belongs to the BCLAF1/THRAP3 family.

The protein localises to the mitochondrion. In Mus musculus (Mouse), this protein is BCLAF1 and THRAP3 family member 3.